The chain runs to 944 residues: Neutral alpha-glucosidase AB (944 aa).

Positions 1-32 (MAAIAAVAARRRRSWLSLVLAYLGVCLGITLA) are cleaved as a signal peptide. A disulfide bridge connects residues cysteine 41 and cysteine 47. At serine 52 the chain carries Phosphoserine. Asparagine 97 carries N-linked (GlcNAc...) asparagine glycosylation. The interval 180–238 (HQRAPRVPQESKDPAEGNGAQPEATPGDGDKPEETQEKAEKDEPGAWEETFKTHSDSKP) is disordered. Positions 207–236 (DGDKPEETQEKAEKDEPGAWEETFKTHSDS) are enriched in basic and acidic residues. Residues aspartate 283 and aspartate 429 each contribute to the substrate site. Aspartate 542 serves as the catalytic Nucleophile. Arginine 602 is a binding site for substrate. The Proton donor role is filled by aspartate 618. The cysteines at positions 633 and 644 are disulfide-linked. Histidine 676 serves as a coordination point for substrate.

It belongs to the glycosyl hydrolase 31 family. In terms of assembly, heterodimer of a catalytic alpha subunit (GANAB) and a beta subunit (PRKCSH). Binds glycosylated PTPRC.

It is found in the endoplasmic reticulum. It localises to the golgi apparatus. Its subcellular location is the melanosome. The enzyme catalyses N(4)-(alpha-D-Glc-(1-&gt;3)-alpha-D-Man-(1-&gt;2)-alpha-D-Man-(1-&gt;2)-alpha-D-Man-(1-&gt;3)-[alpha-D-Man-(1-&gt;2)-alpha-D-Man-(1-&gt;3)-[alpha-D-Man-(1-&gt;2)-alpha-D-Man-(1-&gt;6)]-alpha-D-Man-(1-&gt;6)]-beta-D-Man-(1-&gt;4)-beta-D-GlcNAc-(1-&gt;4)-beta-D-GlcNAc)-L-asparaginyl-[protein] + H2O = N(4)-(alpha-D-Man-(1-&gt;2)-alpha-D-Man-(1-&gt;2)-alpha-D-Man-(1-&gt;3)-[alpha-D-Man-(1-&gt;2)-alpha-D-Man-(1-&gt;3)-[alpha-D-Man-(1-&gt;2)-alpha-D-Man-(1-&gt;6)]-alpha-D-Man-(1-&gt;6)]-beta-D-Man-(1-&gt;4)-beta-D-GlcNAc-(1-&gt;4)-beta-D-GlcNAc)-L-asparaginyl-[protein] (N-glucan mannose isomer 9A1,2,3B1,2,3) + beta-D-glucose. The catalysed reaction is N(4)-(alpha-D-Glc-(1-&gt;3)-alpha-D-Glc-(1-&gt;3)-alpha-D-Man-(1-&gt;2)-alpha-D-Man-(1-&gt;2)-alpha-D-Man-(1-&gt;3)-[alpha-D-Man-(1-&gt;2)-alpha-D-Man-(1-&gt;3)-[alpha-D-Man-(1-&gt;2)-alpha-D-Man-(1-&gt;6)]-alpha-D-Man-(1-&gt;6)]-beta-D-Man-(1-&gt;4)-beta-D-GlcNAc-(1-&gt;4)-beta-D-GlcNAc)-L-asparaginyl-[protein] + H2O = N(4)-(alpha-D-Glc-(1-&gt;3)-alpha-D-Man-(1-&gt;2)-alpha-D-Man-(1-&gt;2)-alpha-D-Man-(1-&gt;3)-[alpha-D-Man-(1-&gt;2)-alpha-D-Man-(1-&gt;3)-[alpha-D-Man-(1-&gt;2)-alpha-D-Man-(1-&gt;6)]-alpha-D-Man-(1-&gt;6)]-beta-D-Man-(1-&gt;4)-beta-D-GlcNAc-(1-&gt;4)-beta-D-GlcNAc)-L-asparaginyl-[protein] + beta-D-glucose. It functions in the pathway glycan metabolism; N-glycan metabolism. Functionally, catalytic subunit of glucosidase II that cleaves sequentially the 2 innermost alpha-1,3-linked glucose residues from the Glc(2)Man(9)GlcNAc(2) oligosaccharide precursor of immature glycoproteins. Required for PKD1/Polycystin-1 and PKD2/Polycystin-2 maturation and localization to the cell surface and cilia. The chain is Neutral alpha-glucosidase AB from Mus musculus (Mouse).